The following is a 98-amino-acid chain: ESAT-6-like protein EsxW (98 aa).

The protein belongs to the WXG100 family. CFP-10 subfamily. In terms of assembly, forms a tight 1:1 complex with EsxV. The complex is destabilized at low pH. Unfolding of the proteins is required for dissociation of the complex and membrane binding.

The protein localises to the secreted. This is ESAT-6-like protein EsxW from Mycobacterium tuberculosis (strain ATCC 25618 / H37Rv).